The primary structure comprises 535 residues: Alpha-1,3-mannosyl-glycoprotein 4-beta-N-acetylglucosaminyltransferase A (535 aa).

At M1–G6 the chain is on the cytoplasmic side. The helical; Signal-anchor for type II membrane protein transmembrane segment at T7–W27 threads the bilayer. A coiled-coil region spans residues Q28 to N63. Residues Q28 to S535 lie on the Lumenal side of the membrane. Residues N77 and N458 are each glycosylated (N-linked (GlcNAc...) asparagine). Residue S474 is modified to Phosphoserine.

Belongs to the glycosyltransferase 54 family. A divalent metal cation is required as a cofactor. In terms of processing, N-glycosylated.

The protein resides in the golgi apparatus membrane. It is found in the secreted. The catalysed reaction is N(4)-{beta-D-GlcNAc-(1-&gt;2)-alpha-D-Man-(1-&gt;3)-[beta-D-GlcNAc-(1-&gt;2)-alpha-D-Man-(1-&gt;6)]-beta-D-Man-(1-&gt;4)-beta-D-GlcNAc-(1-&gt;4)-beta-D-GlcNAc}-L-asparaginyl-[protein] + UDP-N-acetyl-alpha-D-glucosamine = N(4)-{beta-D-GlcNAc-(1-&gt;2)-[beta-D-GlcNAc-(1-&gt;4)]-alpha-D-Man-(1-&gt;3)-[beta-D-GlcNAc-(1-&gt;2)-alpha-D-Man-(1-&gt;6)]-beta-D-Man-(1-&gt;4)-beta-D-GlcNAc-(1-&gt;4)-beta-D-GlcNAc}-L-asparaginyl-[protein] + UDP + H(+). It carries out the reaction an N(4)-{beta-D-GlcNAc-(1-&gt;2)-alpha-D-Man-(1-&gt;3)-[alpha-D-Man-(1-&gt;6)]-beta-D-Man-(1-&gt;4)-beta-D-GlcNAc-(1-&gt;4)-beta-D-GlcNAc}-L-asparaginyl-[protein] + UDP-N-acetyl-alpha-D-glucosamine = an N(4)-{beta-D-GlcNAc-(1-&gt;2)-[beta-D-GlcNAc-(1-&gt;4)]-alpha-D-Man-(1-&gt;3)-[alpha-D-Man-(1-&gt;6)]-beta-D-Man-(1-&gt;4)-beta-D-GlcNAc-(1-&gt;4)-beta-D-GlcNAc}-L-asparaginyl-[protein] + UDP + H(+). It catalyses the reaction an N(4)-{beta-D-GlcNAc-(1-&gt;2)-alpha-D-Man-(1-&gt;3)-[beta-D-GlcNAc-(1-&gt;2)-[beta-D-GlcNAc-(1-&gt;6)]-alpha-D-Man-(1-&gt;6)]-beta-D-Man-(1-&gt;4)-beta-D-GlcNAc-(1-&gt;4)-beta-D-GlcNAc}-L-asparaginyl-[protein] + UDP-N-acetyl-alpha-D-glucosamine = an N(4)-{beta-D-GlcNAc-(1-&gt;2)-[beta-D-GlcNAc-(1-&gt;4)]-alpha-D-Man-(1-&gt;3)-[beta-D-GlcNAc-(1-&gt;2)-[beta-D-GlcNAc-(1-&gt;6)]-alpha-D-Man-(1-&gt;6)]-beta-D-Man-(1-&gt;4)-beta-D-GlcNAc-(1-&gt;4)-beta-D-GlcNAc}-L-asparaginyl-[protein] + UDP + H(+). The enzyme catalyses an N(4)-{beta-D-GlcNAc-(1-&gt;2)-alpha-D-Man-(1-&gt;3)-[beta-D-GlcNAc-(1-&gt;2)-alpha-D-Man-(1-&gt;6)]-beta-D-Man-(1-&gt;4)-beta-D-GlcNAc-(1-&gt;4)-[alpha-L-Fuc-(1-&gt;6)]-beta-D-GlcNAc}-L-asparaginyl-[protein] + UDP-N-acetyl-alpha-D-glucosamine = N(4)-{beta-D-GlcNAc-(1-&gt;2)-[beta-D-GlcNAc-(1-&gt;4)]-alpha-D-Man-(1-&gt;3)-[beta-D-GlcNAc-(1-&gt;2)-alpha-D-Man-(1-&gt;6)]-beta-D-Man-(1-&gt;4)-beta-D-GlcNAc-(1-&gt;4)-[alpha-L-Fuc-(1-&gt;6)]-beta-D-GlcNAc}-asparaginyl-[protein] + UDP + H(+). The catalysed reaction is an N(4)-{beta-D-GlcNAc-(1-&gt;2)-alpha-D-Man-(1-&gt;3)-[beta-D-Gal-(1-&gt;4)-beta-D-GlcNAc-(1-&gt;2)-alpha-D-Man-(1-&gt;6)]-beta-D-Man-(1-&gt;4)-beta-D-GlcNAc-(1-&gt;4)-beta-D-GlcNAc}-L-asparaginyl-[protein] + UDP-N-acetyl-alpha-D-glucosamine = an N(4)-{beta-D-GlcNAc-(1-&gt;2)-[beta-D-GlcNAc-(1-&gt;4)]-alpha-D-Man-(1-&gt;3)-[beta-D-Gal-(1-&gt;4)-beta-D-GlcNAc-(1-&gt;2)-alpha-D-Man-(1-&gt;6)]-beta-D-Man-(1-&gt;4)-beta-D-GlcNAc-(1-&gt;4)-beta-D-GlcNAc}-L-asparaginyl-[protein] + UDP + H(+). It carries out the reaction N(4)-{beta-D-GlcNAc-(1-&gt;2)-alpha-D-Man-(1-&gt;3)-[alpha-D-Man-(1-&gt;3)-{alpha-D-Man-(1-&gt;6)}-alpha-D-Man-(1-&gt;6)]-beta-D-Man-(1-&gt;4)-beta-D-GlcNAc-(1-&gt;4)-beta-D-GlcNAc}-asparaginyl-[protein] + UDP-N-acetyl-alpha-D-glucosamine = N(4)-{beta-D-GlcNAc-(1-&gt;2)-[beta-D-GlcNAc-(1-&gt;4)]-alpha-D-Man-(1-&gt;3)-[alpha-D-Man-(1-&gt;3)-{alpha-D-Man-(1-&gt;6)}-alpha-D-Man-(1-&gt;6)]-beta-D-Man-(1-&gt;4)-beta-D-GlcNAc-(1-&gt;4)-beta-D-GlcNAc}-asparaginyl-[protein] + UDP + H(+). It catalyses the reaction N(4)-{beta-D-GlcNAc-(1-&gt;2)-alpha-D-Man-(1-&gt;3)-beta-D-Man-(1-&gt;4)-beta-D-GlcNAc-(1-&gt;4)-beta-D-GlcNAc}-asparaginyl-[protein] + UDP-N-acetyl-alpha-D-glucosamine = N(4)-{beta-D-GlcNAc-(1-&gt;2)-[beta-D-GlcNAc-(1-&gt;4)]-alpha-D-Man-(1-&gt;3)-beta-D-Man-(1-&gt;4)-beta-D-GlcNAc-(1-&gt;4)-beta-D-GlcNAc}-asparaginyl-[protein] + UDP + H(+). It participates in protein modification; protein glycosylation. With respect to regulation, inhibited by UDP. In terms of biological role, glycosyltransferase that catalyze the transfer of GlcNAc from UDP-GlcNAc to the GlcNAcbeta1-2Manalpha1-3 arm of the core structure of N-linked glycans through a beta1-4 linkage and participates in the production of tri- and tetra-antennary N-linked sugar chains. Involved in glucose transport by mediating SLC2A2/GLUT2 glycosylation, thereby controlling cell-surface expression of SLC2A2 in pancreatic beta cells. In Mus musculus (Mouse), this protein is Alpha-1,3-mannosyl-glycoprotein 4-beta-N-acetylglucosaminyltransferase A.